The sequence spans 510 residues: Maturase K (510 aa).

Belongs to the intron maturase 2 family. MatK subfamily.

The protein resides in the plastid. It localises to the chloroplast. Functionally, usually encoded in the trnK tRNA gene intron. Probably assists in splicing its own and other chloroplast group II introns. The sequence is that of Maturase K from Populus alba (White poplar).